Reading from the N-terminus, the 37-residue chain is Large ribosomal subunit protein bL36 (37 aa).

This sequence belongs to the bacterial ribosomal protein bL36 family.

This is Large ribosomal subunit protein bL36 from Psychromonas ingrahamii (strain DSM 17664 / CCUG 51855 / 37).